Consider the following 399-residue polypeptide: Putative 8-amino-7-oxononanoate synthase (399 aa).

Arg-24 provides a ligand contact to substrate. 111–112 is a binding site for pyridoxal 5'-phosphate; sequence GW. His-141 serves as a coordination point for substrate. Pyridoxal 5'-phosphate is bound by residues Ser-189, 214–217, and 243–246; these read DEAH and TFSK. Residue Lys-246 is modified to N6-(pyridoxal phosphate)lysine. Thr-360 contributes to the substrate binding site.

It belongs to the class-II pyridoxal-phosphate-dependent aminotransferase family. BioF subfamily. In terms of assembly, homodimer. It depends on pyridoxal 5'-phosphate as a cofactor.

It catalyses the reaction 6-carboxyhexanoyl-[ACP] + L-alanine + H(+) = (8S)-8-amino-7-oxononanoate + holo-[ACP] + CO2. The protein operates within cofactor biosynthesis; biotin biosynthesis. In terms of biological role, catalyzes the decarboxylative condensation of pimeloyl-[acyl-carrier protein] and L-alanine to produce 8-amino-7-oxononanoate (AON), [acyl-carrier protein], and carbon dioxide. This Bordetella bronchiseptica (strain ATCC BAA-588 / NCTC 13252 / RB50) (Alcaligenes bronchisepticus) protein is Putative 8-amino-7-oxononanoate synthase (bioF).